Reading from the N-terminus, the 419-residue chain is L-rhamnose isomerase (419 aa).

Positions 262, 294, and 296 each coordinate Mn(2+).

The protein belongs to the rhamnose isomerase family. In terms of assembly, homotetramer. The cofactor is Mn(2+).

The protein resides in the cytoplasm. The catalysed reaction is L-rhamnopyranose = L-rhamnulose. Its pathway is carbohydrate degradation; L-rhamnose degradation; glycerone phosphate from L-rhamnose: step 1/3. Its function is as follows. Catalyzes the interconversion of L-rhamnose and L-rhamnulose. The polypeptide is L-rhamnose isomerase (Klebsiella pneumoniae subsp. pneumoniae (strain ATCC 700721 / MGH 78578)).